Consider the following 603-residue polypeptide: Phosphoribosylformylglycinamidine synthase subunit PurL (603 aa).

The active site involves histidine 32. ATP contacts are provided by tyrosine 35 and lysine 68. Mg(2+) is bound at residue glutamate 70. Substrate is bound by residues 71 to 74 (SHNH) and arginine 93. The active-site Proton acceptor is the histidine 72. Residue aspartate 94 participates in Mg(2+) binding. ATP contacts are provided by residues aspartate 107 and 136 to 139 (GELR). Substrate contacts are provided by glycine 189 and glutamine 208. Aspartate 236 is a Mg(2+) binding site. 280–282 (ESQ) provides a ligand contact to substrate. The ATP site is built by glycine 388, lysine 429, asparagine 442, and glycine 477. Asparagine 478 contacts Mg(2+). Serine 480 is a binding site for substrate. Serine 549 and histidine 556 together coordinate ATP.

It belongs to the FGAMS family. In terms of assembly, monomer. Part of the FGAM synthase complex composed of 1 PurL, 1 PurQ and 2 PurS subunits.

The protein localises to the cytoplasm. It catalyses the reaction N(2)-formyl-N(1)-(5-phospho-beta-D-ribosyl)glycinamide + L-glutamine + ATP + H2O = 2-formamido-N(1)-(5-O-phospho-beta-D-ribosyl)acetamidine + L-glutamate + ADP + phosphate + H(+). Its pathway is purine metabolism; IMP biosynthesis via de novo pathway; 5-amino-1-(5-phospho-D-ribosyl)imidazole from N(2)-formyl-N(1)-(5-phospho-D-ribosyl)glycinamide: step 1/2. Its function is as follows. Part of the phosphoribosylformylglycinamidine synthase complex involved in the purines biosynthetic pathway. Catalyzes the ATP-dependent conversion of formylglycinamide ribonucleotide (FGAR) and glutamine to yield formylglycinamidine ribonucleotide (FGAM) and glutamate. The FGAM synthase complex is composed of three subunits. PurQ produces an ammonia molecule by converting glutamine to glutamate. PurL transfers the ammonia molecule to FGAR to form FGAM in an ATP-dependent manner. PurS interacts with PurQ and PurL and is thought to assist in the transfer of the ammonia molecule from PurQ to PurL. The polypeptide is Phosphoribosylformylglycinamidine synthase subunit PurL (Thermotoga maritima (strain ATCC 43589 / DSM 3109 / JCM 10099 / NBRC 100826 / MSB8)).